The sequence spans 66 residues: Large ribosomal subunit protein uL29 (66 aa).

This sequence belongs to the universal ribosomal protein uL29 family. Part of the 50S ribosomal subunit.

This is Large ribosomal subunit protein uL29 from Thermococcus kodakarensis (strain ATCC BAA-918 / JCM 12380 / KOD1) (Pyrococcus kodakaraensis (strain KOD1)).